A 177-amino-acid polypeptide reads, in one-letter code: MSTTQSERLRELLEPLVASQGLDLEEIAVDSVGRRRVLSVVVDSDTGADLDRIADVSRALSAKLDETDAMGEGEYTLEVGTPGAERSLTQHRHYVRATDRLVRFQLREGGELVARILAVDEDGLDLEVPGVKGRRPTTRRLPFGDIDKARVQVEFNRKDTKNDNQTEHDNKTEEEEA.

The segment covering 153 to 171 (VEFNRKDTKNDNQTEHDNK) has biased composition (basic and acidic residues). The tract at residues 153–177 (VEFNRKDTKNDNQTEHDNKTEEEEA) is disordered.

Belongs to the RimP family.

The protein resides in the cytoplasm. Its function is as follows. Required for maturation of 30S ribosomal subunits. The polypeptide is Ribosome maturation factor RimP (Streptomyces coelicolor (strain ATCC BAA-471 / A3(2) / M145)).